The primary structure comprises 320 residues: SUN domain-containing protein 3 (320 aa).

Residues 1 to 6 lie on the Nuclear side of the membrane; the sequence is MLTRSW. A helical transmembrane segment spans residues 7 to 29; it reads KIILSTVFISTFLLVGLLNHQWL. At 30 to 320 the chain is on the perinuclear space side; the sequence is KETEFPQKPR…RVHGIPSDYT (291 aa). Residues 63-102 adopt a coiled-coil conformation; it reads KEQQELLKKESQTLENNFREILFLIEQIDVLKALLKDMKD. The 162-residue stretch at 156–317 folds into the SUN domain; it reads GASVIEAGTS…YRFRVHGIPS (162 aa).

As to quaternary structure, self-associates. Interacts with SYNE1 and SPAG4/SUN4. Proposed to form a spermatogenesis-specific LINC complex with SYNE1 during sperm head formation possibly implicating a SUN domain-based heterotrimer with SPAG4/SUN4 associating with SYNE1. Can interact with SYNE3; the interaction is questioned by missing colocalization in spermatids. Specifically expressed in testis (at protein level).

It localises to the membrane. The protein localises to the nucleus envelope. Its subcellular location is the nucleus inner membrane. In terms of biological role, as a probable component of the LINC (LInker of Nucleoskeleton and Cytoskeleton) complex, involved in the connection between the nuclear lamina and the cytoskeleton. The nucleocytoplasmic interactions established by the LINC complex play an important role in the transmission of mechanical forces across the nuclear envelope and in nuclear movement and positioning. May be involved in nuclear remodeling during sperm head formation in spermatogenesis. A probable SUN3:SYNE1 LINC complex may tether spermatid nuclei to posterior cytoskeletal structures such as the manchette. The sequence is that of SUN domain-containing protein 3 (Sun3) from Mus musculus (Mouse).